The primary structure comprises 210 residues: Homeobox protein Rhox5 (210 aa).

Positions 29-117 are disordered; it reads KAEAFLQAGE…KNGKPEDRQM (89 aa). Positions 117 to 175 form a DNA-binding region, homeobox; atypical; sequence MPLQGSRFAQQRLSELQSILQRTNSFDVPREDLYRLMDTCVARVQNWFKIRRAAARRNR.

The protein resides in the nucleus. In terms of biological role, transcription factor required for differentiation of embryonic stem cells (ESCs) into primordial germ cells. This is Homeobox protein Rhox5 (Rhox5) from Mus minutoides (Southern African pygmy mouse).